A 93-amino-acid chain; its full sequence is Translation initiation factor IF-1 (93 aa).

Residues 1 to 72 (MAKEELIQFE…EKGRLIFRHK (72 aa)) form the S1-like domain. The tract at residues 70–93 (RHKDERPGGPPRSGPPRGGQFRRR) is disordered.

This sequence belongs to the IF-1 family. Component of the 30S ribosomal translation pre-initiation complex which assembles on the 30S ribosome in the order IF-2 and IF-3, IF-1 and N-formylmethionyl-tRNA(fMet); mRNA recruitment can occur at any time during PIC assembly.

It is found in the cytoplasm. Functionally, one of the essential components for the initiation of protein synthesis. Stabilizes the binding of IF-2 and IF-3 on the 30S subunit to which N-formylmethionyl-tRNA(fMet) subsequently binds. Helps modulate mRNA selection, yielding the 30S pre-initiation complex (PIC). Upon addition of the 50S ribosomal subunit IF-1, IF-2 and IF-3 are released leaving the mature 70S translation initiation complex. This chain is Translation initiation factor IF-1, found in Nitrobacter winogradskyi (strain ATCC 25391 / DSM 10237 / CIP 104748 / NCIMB 11846 / Nb-255).